The following is a 90-amino-acid chain: Small ribosomal subunit protein bS20 (90 aa).

The segment at 1–21 (MANHKSALKRVRQTKKRTERN) is disordered.

Belongs to the bacterial ribosomal protein bS20 family.

Binds directly to 16S ribosomal RNA. The chain is Small ribosomal subunit protein bS20 from Nitratiruptor sp. (strain SB155-2).